A 260-amino-acid chain; its full sequence is Proteasome subunit alpha type-1 (260 aa).

The tract at residues Pro240–Met260 is disordered. Positions Gly244 to Met260 are enriched in low complexity.

The protein belongs to the peptidase T1A family. As to quaternary structure, the 26S proteasome consists of a 20S proteasome core and two 19S regulatory subunits. The 20S proteasome core is composed of 28 subunits that are arranged in four stacked rings, resulting in a barrel-shaped structure. The two end rings are each formed by seven alpha subunits, and the two central rings are each formed by seven beta subunits. The catalytic chamber with the active sites is on the inside of the barrel.

The protein localises to the cytoplasm. The protein resides in the nucleus. Functionally, the proteasome is a multicatalytic proteinase complex which is characterized by its ability to cleave peptides with Arg, Phe, Tyr, Leu, and Glu adjacent to the leaving group at neutral or slightly basic pH. The proteasome has an ATP-dependent proteolytic activity. This Caenorhabditis elegans protein is Proteasome subunit alpha type-1 (pas-6).